The sequence spans 953 residues: UvrABC system protein A (953 aa).

33 to 40 (GLSGSGKS) is an ATP binding site. 2 ABC transporter domains span residues 320–599 (WGST…EESI) and 619–949 (GHDN…RYLK). 652–659 (GVSGSGKS) lines the ATP pocket. A C4-type zinc finger spans residues 752-778 (CEACQGDGLIKIEMHFLPDVYVKCDIC).

It belongs to the ABC transporter superfamily. UvrA family. In terms of assembly, forms a heterotetramer with UvrB during the search for lesions.

Its subcellular location is the cytoplasm. In terms of biological role, the UvrABC repair system catalyzes the recognition and processing of DNA lesions. UvrA is an ATPase and a DNA-binding protein. A damage recognition complex composed of 2 UvrA and 2 UvrB subunits scans DNA for abnormalities. When the presence of a lesion has been verified by UvrB, the UvrA molecules dissociate. The protein is UvrABC system protein A of Rickettsia bellii (strain RML369-C).